We begin with the raw amino-acid sequence, 217 residues long: Peptide methionine sulfoxide reductase MsrA (217 aa).

Residue Cys56 is part of the active site.

Belongs to the MsrA Met sulfoxide reductase family.

The catalysed reaction is L-methionyl-[protein] + [thioredoxin]-disulfide + H2O = L-methionyl-(S)-S-oxide-[protein] + [thioredoxin]-dithiol. It catalyses the reaction [thioredoxin]-disulfide + L-methionine + H2O = L-methionine (S)-S-oxide + [thioredoxin]-dithiol. In terms of biological role, has an important function as a repair enzyme for proteins that have been inactivated by oxidation. Catalyzes the reversible oxidation-reduction of methionine sulfoxide in proteins to methionine. This is Peptide methionine sulfoxide reductase MsrA from Rippkaea orientalis (strain PCC 8801 / RF-1) (Cyanothece sp. (strain PCC 8801)).